Consider the following 736-residue polypeptide: Microtubule-associated protein mu-2 (736 aa).

Belongs to the orthoreovirus mu-2 protein family. In terms of assembly, interacts with protein mu-NS; in viral inclusions. Interacts with polymerase lambda-3; this interaction stimulates the ATPase activity of mu-2. The cofactor is a divalent metal cation.

It is found in the virion. The protein resides in the host cytoplasm. It localises to the host cytoskeleton. In terms of biological role, minor inner capsid (core) component. Displays NTPase and RNA 5'-triphosphatase (RTPase) activities. ATP is the preferred substrate for hydrolysis. May function as a cofactor of polymerase lambda-3. Associates with microtubules and plays a role in the formation, structural organization and morphology of viral inclusions, where the assembly of cores and the replication of viral RNA occur. Together with mu-NS, recruits the other core proteins to these inclusions. This chain is Microtubule-associated protein mu-2 (M1), found in Mammalia (T1L).